The following is a 97-amino-acid chain: Cobalt transport protein CbiN (97 aa).

2 consecutive transmembrane segments (helical) span residues 6-26 (VLMI…YSGL) and 68-88 (SLLF…FFGY).

The protein belongs to the CbiN family. Forms an energy-coupling factor (ECF) transporter complex composed of an ATP-binding protein (A component, CbiO), a transmembrane protein (T component, CbiQ) and 2 possible substrate-capture proteins (S components, CbiM and CbiN) of unknown stoichimetry.

The protein resides in the cell membrane. It participates in cofactor biosynthesis; adenosylcobalamin biosynthesis. Functionally, part of the energy-coupling factor (ECF) transporter complex CbiMNOQ involved in cobalt import. The protein is Cobalt transport protein CbiN of Methanococcus maripaludis (strain C6 / ATCC BAA-1332).